Consider the following 466-residue polypeptide: ATP synthase subunit beta (466 aa).

155–162 is a binding site for ATP; that stretch reads GGAGVGKT.

Belongs to the ATPase alpha/beta chains family. F-type ATPases have 2 components, CF(1) - the catalytic core - and CF(0) - the membrane proton channel. CF(1) has five subunits: alpha(3), beta(3), gamma(1), delta(1), epsilon(1). CF(0) has three main subunits: a(1), b(2) and c(9-12). The alpha and beta chains form an alternating ring which encloses part of the gamma chain. CF(1) is attached to CF(0) by a central stalk formed by the gamma and epsilon chains, while a peripheral stalk is formed by the delta and b chains.

The protein localises to the cell inner membrane. The catalysed reaction is ATP + H2O + 4 H(+)(in) = ADP + phosphate + 5 H(+)(out). Functionally, produces ATP from ADP in the presence of a proton gradient across the membrane. The catalytic sites are hosted primarily by the beta subunits. This is ATP synthase subunit beta from Bordetella petrii (strain ATCC BAA-461 / DSM 12804 / CCUG 43448).